We begin with the raw amino-acid sequence, 225 residues long: uncharacterized protein (225 aa).

N-linked (GlcNAc...) asparagine; by host glycans are attached at residues Asn-48, Asn-58, Asn-105, and Asn-108. A helical transmembrane segment spans residues 156 to 178 (LWGYLKQPLVMVGIAAVVGYLIY).

Belongs to the ascovirus HvAv ORF58 family.

The protein localises to the membrane. This is an uncharacterized protein from Heliothis virescens ascovirus 3e (HvAV-3e).